Here is an 891-residue protein sequence, read N- to C-terminus: Longitudinals lacking protein, isoform G (891 aa).

The BTB domain maps to 32 to 97 (VDCTLAAEGK…MYRGEVNISQ (66 aa)). Disordered stretches follow at residues 115–200 (LSDN…SSVL) and 228–340 (SSGP…ASAS). Serine 140 is modified (phosphoserine). Threonine 161 carries the phosphothreonine modification. Serine 162 and serine 168 each carry phosphoserine. Composition is skewed to low complexity over residues 162–175 (SGDV…SSSP), 228–251 (SSGP…LTST), 263–293 (TSST…QTTS), and 329–340 (NSATGPNPASAS). Residues serine 372, serine 375, and serine 378 each carry the phosphoserine modification. A disordered region spans residues 446 to 467 (QDAQQRDPQDLSRKENTAPDVA). Positions 449–462 (QQRDPQDLSRKENT) are enriched in basic and acidic residues. Phosphoserine occurs at positions 696 and 705. Threonine 706 is subject to Phosphothreonine. A phosphoserine mark is found at serine 749 and serine 750. A C2H2-type 1; degenerate zinc finger spans residues 791–813 (YECRHCGKKYRWKSTLRRHENVE). The C2H2-type 2 zinc finger occupies 821–843 (HQCPYCPYKSKQRGNLGVHVRKH). The tract at residues 840 to 891 (VRKHHTDLPQLPSKRRSKYSMNRENGMSGSMSDDSQGKLIIDFNGKGELETK) is disordered. Serine 874 bears the Phosphoserine mark.

Expressed in both mesoderm and ectoderm with expression highest in the mesectoderm by stage 11. Becomes enriched in a cluster of brain cells, in abdominal histoblasts, and in the embryonic imaginal disks during later stages.

Its subcellular location is the nucleus. Functionally, putative transcription factor required for axon growth and guidance in the central and peripheral nervous systems. Repels CNS axons away from the midline by promoting the expression of the midline repellent sli and its receptor robo. This is Longitudinals lacking protein, isoform G from Drosophila melanogaster (Fruit fly).